We begin with the raw amino-acid sequence, 285 residues long: Small ribosomal subunit protein uS2 (285 aa).

A disordered region spans residues 262–285; it reads NDDWNEDDTAPAAPGAASWGGAAF. Residues 271–285 are compositionally biased toward low complexity; that stretch reads APAAPGAASWGGAAF.

The protein belongs to the universal ribosomal protein uS2 family. As to quaternary structure, component of the small ribosomal subunit. Mature ribosomes consist of a small (40S) and a large (60S) subunit. The 40S subunit contains about 33 different proteins and 1 molecule of RNA (18S). The 60S subunit contains about 49 different proteins and 3 molecules of RNA (28S, 5.8S and 5S). Interacts with ribosomal protein S21.

The protein resides in the cytoplasm. Required for the assembly and/or stability of the 40S ribosomal subunit. Required for the processing of the 20S rRNA-precursor to mature 18S rRNA in a late step of the maturation of 40S ribosomal subunits. This chain is Small ribosomal subunit protein uS2, found in Anopheles gambiae (African malaria mosquito).